We begin with the raw amino-acid sequence, 385 residues long: Actin-2 (385 aa).

The protein belongs to the actin family. ARP1 subfamily.

The protein resides in the cytoplasm. It localises to the cytoskeleton. The protein is Actin-2 of Pneumocystis carinii.